A 437-amino-acid chain; its full sequence is Putative ankyrin repeat protein FPV014 (437 aa).

ANK repeat units lie at residues 32 to 61, 65 to 94, 99 to 128, 131 to 160, 164 to 195, 197 to 226, and 230 to 259; these read YGCSLLHCAVENGNTEIARILLLEGANPDL, STPTALHRAVILRHYDIVNLLMEFNVDPDN, ESRTPLEYAVKLNDVKMTKTLLDYGADAED, RFNCPINDAAANGNLEICKLLIDAGARINS, GSVYTIHHAIRSGNYELVVELLSRGALPDVED, LSFSSLHHAVMEGSADMVLTLLEHGASVDV, and CGRTPLFLAANASELDIVKVLLDFWADTSV.

This chain is Putative ankyrin repeat protein FPV014, found in Fowlpox virus (strain NVSL) (FPV).